Consider the following 538-residue polypeptide: Chaperonin GroEL (538 aa).

ATP contacts are provided by residues 29 to 32 (TLGP), 86 to 90 (DGTTT), Gly413, 479 to 481 (DAL), and Asp495.

Belongs to the chaperonin (HSP60) family. Forms a cylinder of 14 subunits composed of two heptameric rings stacked back-to-back. Interacts with the co-chaperonin GroES.

Its subcellular location is the cytoplasm. The catalysed reaction is ATP + H2O + a folded polypeptide = ADP + phosphate + an unfolded polypeptide.. Together with its co-chaperonin GroES, plays an essential role in assisting protein folding. The GroEL-GroES system forms a nano-cage that allows encapsulation of the non-native substrate proteins and provides a physical environment optimized to promote and accelerate protein folding. This is Chaperonin GroEL from Fervidobacterium nodosum (strain ATCC 35602 / DSM 5306 / Rt17-B1).